Reading from the N-terminus, the 129-residue chain is Protein HMF1 (129 aa).

A Glycyl lysine isopeptide (Lys-Gly) (interchain with G-Cter in ubiquitin) cross-link involves residue Lys-52.

The protein belongs to the RutC family.

It localises to the cytoplasm. The protein localises to the nucleus. It is found in the mitochondrion intermembrane space. The protein is Protein HMF1 (HMF1) of Saccharomyces cerevisiae (strain ATCC 204508 / S288c) (Baker's yeast).